Here is a 207-residue protein sequence, read N- to C-terminus: Transcriptional regulator GfcR (207 aa).

It belongs to the purine/pyrimidine phosphoribosyltransferase family. GfcR subfamily.

This is Transcriptional regulator GfcR from Methanocella arvoryzae (strain DSM 22066 / NBRC 105507 / MRE50).